Here is a 650-residue protein sequence, read N- to C-terminus: A-kinase anchor protein 10, mitochondrial (650 aa).

The N-terminal 16 residues, 1-16, are a transit peptide targeting the mitochondrion; it reads RALRPDPGPAMSFFRR. 2 disordered regions span residues 1-45 and 168-192; these read RALR…QKST and SSLA…ESLD. Ser-40 is modified (phosphoserine). RGS domains follow at residues 113-356 and 366-493; these read TLEQ…CKYQ and YLAD…YKYL. Position 268 is a phosphoserine (Ser-268). The disordered stretch occupies residues 512 to 535; the sequence is LAAQGSGGPPDDPLPGASDPSASQ. The span at 525 to 535 shows a compositional bias: low complexity; the sequence is LPGASDPSASQ. Positions 622–635 are PKA-RII subunit binding; it reads LAWKIAKMIVSDVM.

The protein localises to the mitochondrion. It is found in the membrane. It localises to the cytoplasm. Differentially targeted protein that binds to type I and II regulatory subunits of protein kinase A and anchors them to the mitochondria or the plasma membrane. Although the physiological relevance between PKA and AKAPS with mitochondria is not fully understood, one idea is that BAD, a proapoptotic member, is phosphorylated and inactivated by mitochondria-anchored PKA. It cannot be excluded too that it may facilitate PKA as well as G protein signal transduction, by acting as an adapter for assembling multiprotein complexes. With its RGS domain, it could lead to the interaction to G-alpha proteins, providing a link between the signaling machinery and the downstream kinase. In Sus scrofa (Pig), this protein is A-kinase anchor protein 10, mitochondrial (AKAP10).